The sequence spans 415 residues: Serine hydroxymethyltransferase 1 (415 aa).

(6S)-5,6,7,8-tetrahydrofolate is bound by residues Leu122 and 126-128 (GHL). N6-(pyridoxal phosphate)lysine is present on Lys230.

This sequence belongs to the SHMT family. In terms of assembly, homodimer. Pyridoxal 5'-phosphate serves as cofactor.

Its subcellular location is the cytoplasm. It carries out the reaction (6R)-5,10-methylene-5,6,7,8-tetrahydrofolate + glycine + H2O = (6S)-5,6,7,8-tetrahydrofolate + L-serine. Its pathway is one-carbon metabolism; tetrahydrofolate interconversion. It functions in the pathway amino-acid biosynthesis; glycine biosynthesis; glycine from L-serine: step 1/1. In terms of biological role, catalyzes the reversible interconversion of serine and glycine with tetrahydrofolate (THF) serving as the one-carbon carrier. This reaction serves as the major source of one-carbon groups required for the biosynthesis of purines, thymidylate, methionine, and other important biomolecules. Also exhibits THF-independent aldolase activity toward beta-hydroxyamino acids, producing glycine and aldehydes, via a retro-aldol mechanism. In Burkholderia thailandensis (strain ATCC 700388 / DSM 13276 / CCUG 48851 / CIP 106301 / E264), this protein is Serine hydroxymethyltransferase 1.